The sequence spans 83 residues: ATP synthase subunit c 2 (83 aa).

2 helical membrane-spanning segments follow: residues 8-28 (IASILGAAFAVGIGSLGPALG) and 58-78 (LAMIETMAIYCLVIALLLLFA).

It belongs to the ATPase C chain family. As to quaternary structure, F-type ATPases have 2 components, F(1) - the catalytic core - and F(0) - the membrane proton channel. F(1) has five subunits: alpha(3), beta(3), gamma(1), delta(1), epsilon(1). F(0) has four main subunits: a(1), b(1), b'(1) and c(10-14). The alpha and beta chains form an alternating ring which encloses part of the gamma chain. F(1) is attached to F(0) by a central stalk formed by the gamma and epsilon chains, while a peripheral stalk is formed by the delta, b and b' chains.

Its subcellular location is the cell inner membrane. Functionally, f(1)F(0) ATP synthase produces ATP from ADP in the presence of a proton or sodium gradient. F-type ATPases consist of two structural domains, F(1) containing the extramembraneous catalytic core and F(0) containing the membrane proton channel, linked together by a central stalk and a peripheral stalk. During catalysis, ATP synthesis in the catalytic domain of F(1) is coupled via a rotary mechanism of the central stalk subunits to proton translocation. Key component of the F(0) channel; it plays a direct role in translocation across the membrane. A homomeric c-ring of between 10-14 subunits forms the central stalk rotor element with the F(1) delta and epsilon subunits. This Cereibacter sphaeroides (strain ATCC 17029 / ATH 2.4.9) (Rhodobacter sphaeroides) protein is ATP synthase subunit c 2.